Consider the following 255-residue polypeptide: tRNA (guanine-N(1)-)-methyltransferase (255 aa).

S-adenosyl-L-methionine-binding positions include Gly-117 and Leu-137 to Leu-142.

The protein belongs to the RNA methyltransferase TrmD family. In terms of assembly, homodimer.

The protein localises to the cytoplasm. It catalyses the reaction guanosine(37) in tRNA + S-adenosyl-L-methionine = N(1)-methylguanosine(37) in tRNA + S-adenosyl-L-homocysteine + H(+). In terms of biological role, specifically methylates guanosine-37 in various tRNAs. The sequence is that of tRNA (guanine-N(1)-)-methyltransferase from Paraburkholderia phytofirmans (strain DSM 17436 / LMG 22146 / PsJN) (Burkholderia phytofirmans).